Consider the following 519-residue polypeptide: Protein M35 (519 aa).

The interval 485–519 (PVRPIRGGGQRMANMRGARPYSTVQRGRRRHESEV) is disordered. The segment covering 510–519 (RGRRRHESEV) has biased composition (basic residues).

Its subcellular location is the host nucleus. Its function is as follows. Plays a role in the inhibition of host type I interferon production within the host nucleus. Targets specifically the NF-kappa-B-mediated interferon-beta transcription. This chain is Protein M35 (M35), found in Mus musculus (Mouse).